Here is a 71-residue protein sequence, read N- to C-terminus: High-potential iron-sulfur protein isozyme 2 (71 aa).

Residues Cys-34, Cys-37, Cys-51, and Cys-65 each contribute to the [4Fe-4S] cluster site.

This sequence belongs to the high-potential iron-sulfur protein (HiPIP) family. In terms of assembly, homodimer.

Functionally, specific class of high-redox-potential 4Fe-4S ferredoxins. Functions in anaerobic electron transport in most purple and in some other photosynthetic bacteria and in at least one genus (Paracoccus) of halophilic, denitrifying bacteria. The polypeptide is High-potential iron-sulfur protein isozyme 2 (hip2) (Ectothiorhodospira shaposhnikovii (Ectothiorhodospira vacuolata)).